A 340-amino-acid chain; its full sequence is GTP 3',8-cyclase (340 aa).

A Radical SAM core domain is found at 8–230; that stretch reads KLGRPIRDLR…EQHFEIDPVE (223 aa). Residue R17 participates in GTP binding. Residues C24 and C28 each coordinate [4Fe-4S] cluster. Y30 contacts S-adenosyl-L-methionine. Position 31 (C31) interacts with [4Fe-4S] cluster. Position 71 (R71) interacts with GTP. Position 75 (G75) interacts with S-adenosyl-L-methionine. T102 is a binding site for GTP. An S-adenosyl-L-methionine-binding site is contributed by S126. Position 163 (K163) interacts with GTP. Residue M197 coordinates S-adenosyl-L-methionine. 2 residues coordinate [4Fe-4S] cluster: C261 and C264. A GTP-binding site is contributed by 266–268; sequence RAR. Residue C278 coordinates [4Fe-4S] cluster.

The protein belongs to the radical SAM superfamily. MoaA family. Monomer and homodimer. It depends on [4Fe-4S] cluster as a cofactor.

The enzyme catalyses GTP + AH2 + S-adenosyl-L-methionine = (8S)-3',8-cyclo-7,8-dihydroguanosine 5'-triphosphate + 5'-deoxyadenosine + L-methionine + A + H(+). It participates in cofactor biosynthesis; molybdopterin biosynthesis. Functionally, catalyzes the cyclization of GTP to (8S)-3',8-cyclo-7,8-dihydroguanosine 5'-triphosphate. This Staphylococcus aureus (strain bovine RF122 / ET3-1) protein is GTP 3',8-cyclase.